The sequence spans 166 residues: MEIKTIQSEEEKLIGKNVFLTTLDAVFNWARGNSLWPLTFGLACCAIEVMAAGGPKYDFSRFGYEVWRPSPRHADLMIVAGTITKKMQPLVLRLYEQMAEPKYVIAMGSCAISGGPFVDSYHVVPGANTFLPVDVYIPGCPPRPEALLYGWLELKRKIQNPRVVKR.

Positions 44, 45, 110, and 140 each coordinate [4Fe-4S] cluster.

The protein belongs to the complex I 20 kDa subunit family. As to quaternary structure, NDH-1 is composed of 14 different subunits. Subunits NuoB, C, D, E, F, and G constitute the peripheral sector of the complex. It depends on [4Fe-4S] cluster as a cofactor.

It localises to the cell membrane. The catalysed reaction is a quinone + NADH + 5 H(+)(in) = a quinol + NAD(+) + 4 H(+)(out). Functionally, NDH-1 shuttles electrons from NADH, via FMN and iron-sulfur (Fe-S) centers, to quinones in the respiratory chain. The immediate electron acceptor for the enzyme in this species is believed to be a menaquinone. Couples the redox reaction to proton translocation (for every two electrons transferred, four hydrogen ions are translocated across the cytoplasmic membrane), and thus conserves the redox energy in a proton gradient. This chain is NADH-quinone oxidoreductase subunit B, found in Carboxydothermus hydrogenoformans (strain ATCC BAA-161 / DSM 6008 / Z-2901).